A 1415-amino-acid chain; its full sequence is DNA-directed RNA polymerase subunit beta' (1415 aa).

The Zn(2+) site is built by Cys-72, Cys-74, Cys-87, and Cys-90. Mg(2+) is bound by residues Asp-463, Asp-465, and Asp-467. Zn(2+)-binding residues include Cys-811, Cys-885, Cys-892, and Cys-895.

It belongs to the RNA polymerase beta' chain family. The RNAP catalytic core consists of 2 alpha, 1 beta, 1 beta' and 1 omega subunit. When a sigma factor is associated with the core the holoenzyme is formed, which can initiate transcription. Mg(2+) is required as a cofactor. Requires Zn(2+) as cofactor.

The catalysed reaction is RNA(n) + a ribonucleoside 5'-triphosphate = RNA(n+1) + diphosphate. DNA-dependent RNA polymerase catalyzes the transcription of DNA into RNA using the four ribonucleoside triphosphates as substrates. The sequence is that of DNA-directed RNA polymerase subunit beta' from Cereibacter sphaeroides (strain ATCC 17025 / ATH 2.4.3) (Rhodobacter sphaeroides).